The sequence spans 354 residues: Uroporphyrinogen decarboxylase (354 aa).

Residues Arg27–Arg31, Asp77, Tyr154, Thr209, and His327 each bind substrate.

The protein belongs to the uroporphyrinogen decarboxylase family. Homodimer.

Its subcellular location is the cytoplasm. It carries out the reaction uroporphyrinogen III + 4 H(+) = coproporphyrinogen III + 4 CO2. It functions in the pathway porphyrin-containing compound metabolism; protoporphyrin-IX biosynthesis; coproporphyrinogen-III from 5-aminolevulinate: step 4/4. In terms of biological role, catalyzes the decarboxylation of four acetate groups of uroporphyrinogen-III to yield coproporphyrinogen-III. The protein is Uroporphyrinogen decarboxylase of Escherichia coli O81 (strain ED1a).